A 125-amino-acid polypeptide reads, in one-letter code: Small ribosomal subunit protein eS8 (125 aa).

This sequence belongs to the eukaryotic ribosomal protein eS8 family. As to quaternary structure, part of the 30S ribosomal subunit.

The sequence is that of Small ribosomal subunit protein eS8 from Methanosarcina barkeri (strain Fusaro / DSM 804).